The sequence spans 174 residues: ATP synthase subunit b 2 (174 aa).

The helical transmembrane segment at I27–P47 threads the bilayer.

Belongs to the ATPase B chain family. As to quaternary structure, F-type ATPases have 2 components, F(1) - the catalytic core - and F(0) - the membrane proton channel. F(1) has five subunits: alpha(3), beta(3), gamma(1), delta(1), epsilon(1). F(0) has three main subunits: a(1), b(2) and c(10-14). The alpha and beta chains form an alternating ring which encloses part of the gamma chain. F(1) is attached to F(0) by a central stalk formed by the gamma and epsilon chains, while a peripheral stalk is formed by the delta and b chains.

It localises to the cell inner membrane. F(1)F(0) ATP synthase produces ATP from ADP in the presence of a proton or sodium gradient. F-type ATPases consist of two structural domains, F(1) containing the extramembraneous catalytic core and F(0) containing the membrane proton channel, linked together by a central stalk and a peripheral stalk. During catalysis, ATP synthesis in the catalytic domain of F(1) is coupled via a rotary mechanism of the central stalk subunits to proton translocation. Its function is as follows. Component of the F(0) channel, it forms part of the peripheral stalk, linking F(1) to F(0). The b'-subunit is a diverged and duplicated form of b found in plants and photosynthetic bacteria. In Dinoroseobacter shibae (strain DSM 16493 / NCIMB 14021 / DFL 12), this protein is ATP synthase subunit b 2 (atpF2).